The following is a 315-amino-acid chain: Pantothenate synthetase (315 aa).

ATP is bound at residue 45–52; the sequence is MGALHEGH. The active-site Proton donor is the His52. Gln77 contacts (R)-pantoate. Residue Gln77 participates in beta-alanine binding. 163–166 contributes to the ATP binding site; the sequence is GEKD. Gln169 contributes to the (R)-pantoate binding site. ATP is bound by residues Val192 and 200-203; that span reads MSSR.

This sequence belongs to the pantothenate synthetase family. Homodimer.

The protein resides in the cytoplasm. It carries out the reaction (R)-pantoate + beta-alanine + ATP = (R)-pantothenate + AMP + diphosphate + H(+). Its pathway is cofactor biosynthesis; (R)-pantothenate biosynthesis; (R)-pantothenate from (R)-pantoate and beta-alanine: step 1/1. Its function is as follows. Catalyzes the condensation of pantoate with beta-alanine in an ATP-dependent reaction via a pantoyl-adenylate intermediate. The protein is Pantothenate synthetase of Mycobacterium ulcerans (strain Agy99).